The following is a 699-amino-acid chain: Elongation factor G (699 aa).

Positions 8-288 constitute a tr-type G domain; sequence EDYRNFGIMA…AVVDYLPSPL (281 aa). GTP contacts are provided by residues 17–24, 86–90, and 140–143; these read AHIDAGKT, DTPGH, and NKMD.

The protein belongs to the TRAFAC class translation factor GTPase superfamily. Classic translation factor GTPase family. EF-G/EF-2 subfamily.

The protein localises to the cytoplasm. Its function is as follows. Catalyzes the GTP-dependent ribosomal translocation step during translation elongation. During this step, the ribosome changes from the pre-translocational (PRE) to the post-translocational (POST) state as the newly formed A-site-bound peptidyl-tRNA and P-site-bound deacylated tRNA move to the P and E sites, respectively. Catalyzes the coordinated movement of the two tRNA molecules, the mRNA and conformational changes in the ribosome. The protein is Elongation factor G of Rhizobium etli (strain ATCC 51251 / DSM 11541 / JCM 21823 / NBRC 15573 / CFN 42).